The sequence spans 475 residues: Ribulose bisphosphate carboxylase large chain (475 aa).

A propeptide spanning residues 1-2 (MS) is cleaved from the precursor. Residue proline 3 is modified to N-acetylproline. At lysine 14 the chain carries N6,N6,N6-trimethyllysine. Residues asparagine 123 and threonine 173 each coordinate substrate. Catalysis depends on lysine 175, which acts as the Proton acceptor. Lysine 177 is a binding site for substrate. Mg(2+) is bound by residues lysine 201, aspartate 203, and glutamate 204. Lysine 201 bears the N6-carboxylysine mark. Residue histidine 294 is the Proton acceptor of the active site. Residues arginine 295, histidine 327, and serine 379 each contribute to the substrate site.

The protein belongs to the RuBisCO large chain family. Type I subfamily. As to quaternary structure, heterohexadecamer of 8 large chains and 8 small chains; disulfide-linked. The disulfide link is formed within the large subunit homodimers. Mg(2+) is required as a cofactor. In terms of processing, the disulfide bond which can form in the large chain dimeric partners within the hexadecamer appears to be associated with oxidative stress and protein turnover.

It localises to the plastid. It is found in the chloroplast. The catalysed reaction is 2 (2R)-3-phosphoglycerate + 2 H(+) = D-ribulose 1,5-bisphosphate + CO2 + H2O. It carries out the reaction D-ribulose 1,5-bisphosphate + O2 = 2-phosphoglycolate + (2R)-3-phosphoglycerate + 2 H(+). In terms of biological role, ruBisCO catalyzes two reactions: the carboxylation of D-ribulose 1,5-bisphosphate, the primary event in carbon dioxide fixation, as well as the oxidative fragmentation of the pentose substrate in the photorespiration process. Both reactions occur simultaneously and in competition at the same active site. This Magnolia acuminata (Cucumber tree) protein is Ribulose bisphosphate carboxylase large chain.